We begin with the raw amino-acid sequence, 568 residues long: Zinc finger protein 76 (568 aa).

K24 participates in a covalent cross-link: Glycyl lysine isopeptide (Lys-Gly) (interchain with G-Cter in SUMO2). 3 consecutive repeat copies span residues 34–45, 62–73, and 88–99. Residues 34 to 99 form a 3 X 12 AA approximate repeats region; that stretch reads IQLEDGTTAY…LEDGSTAYIH (66 aa). 7 consecutive C2H2-type zinc fingers follow at residues 165–189, 195–219, 225–249, 255–279, 285–309, 315–339, and 345–368; these read FRCG…ERAH, YRCD…VRTH, YKCP…VRTH, FRCP…VRTH, YTCP…VRIH, YVCT…HVVH, and YTCS…RSAH. Positions 365–401 are disordered; that stretch reads RSAHGELEATEESEQALYEQQQLEAASAAEESPSPKP. Low complexity predominate over residues 379 to 396; it reads QALYEQQQLEAASAAEES.

It belongs to the krueppel C2H2-type zinc-finger protein family.

The protein resides in the nucleus. Its function is as follows. May be involved in transcriptional regulation. The polypeptide is Zinc finger protein 76 (Znf76) (Rattus norvegicus (Rat)).